A 644-amino-acid chain; its full sequence is Biosynthetic arginine decarboxylase (644 aa).

Lys-105 is modified (N6-(pyridoxal phosphate)lysine). 287 to 297 lines the substrate pocket; sequence LDVGGGLGIDY.

Belongs to the Orn/Lys/Arg decarboxylase class-II family. SpeA subfamily. Mg(2+) serves as cofactor. It depends on pyridoxal 5'-phosphate as a cofactor.

It carries out the reaction L-arginine + H(+) = agmatine + CO2. Its function is as follows. Catalyzes the biosynthesis of agmatine from arginine. This is Biosynthetic arginine decarboxylase from Parasynechococcus marenigrum (strain WH8102).